Here is a 305-residue protein sequence, read N- to C-terminus: Phosphoinositol dihydroceramide synthase (305 aa).

A signal peptide spans 1 to 23 (MPSKKETLTVIVIMALFLLLTAA). A lipid anchor (N-palmitoyl cysteine) is attached at C24. C24 carries the S-diacylglycerol cysteine lipid modification. Helical transmembrane passes span 41–61 (LFFA…FAIF), 117–137 (VFAG…GLCL), 149–169 (FALV…IHPA), 216–236 (FAAV…YAII), 241–261 (WYVI…AIYS), and 266–286 (IIDV…FEYG).

It localises to the membrane. It carries out the reaction N-(2-hydroxy-fatty acyl)-dihydroceramide + a 1,2-diacyl-sn-glycero-3-phospho-(1D-myo-inositol) = inositol-1-phospho-N-(2-hydroxy-fatty acyl)-dihydroceramide + a 1,2-diacyl-sn-glycerol. In terms of biological role, catalyzes the addition of a phosphorylinositol group onto dihydroceramide to form phosphoinositol dihydroceramide (PI-DHC), an essential step in sphingolipid biosynthesis. This is Phosphoinositol dihydroceramide synthase from Bacteroides thetaiotaomicron (strain ATCC 29148 / DSM 2079 / JCM 5827 / CCUG 10774 / NCTC 10582 / VPI-5482 / E50).